Reading from the N-terminus, the 284-residue chain is Tropomyosin-1 (284 aa).

Positions 1 to 284 form a coiled coil; it reads MDAIKKKMLA…DSTFAELAGY (284 aa). Positions 103–131 are disordered; sequence EERLQSATEKLEEASKAADESERGRKVLE.

This sequence belongs to the tropomyosin family. In terms of assembly, homodimer.

Tropomyosin, in association with the troponin complex, plays a central role in the calcium dependent regulation of muscle contraction. This Biomphalaria glabrata (Bloodfluke planorb) protein is Tropomyosin-1.